Reading from the N-terminus, the 424-residue chain is Putative histone deacetylase complex subunit cti6 (424 aa).

4 disordered regions span residues 1-49, 117-155, 170-341, and 381-405; these read MPSN…GEVT, SKYL…TMNS, KEKS…PDGT, and AQSA…ETLR. The PHD-type zinc-finger motif lies at 48–103; sequence VTRCVCGIVESDDEASDGGLYIQCDQCSVWQHGNCVGFADESEVPEVYYCEICHPE. Residues 127–137 are compositionally biased toward low complexity; the sequence is EASQTEESSST. A Phosphoserine modification is found at S187. A compositionally biased stretch (acidic residues) spans 241-256; sequence DAPEEETVDTVEEIAD. Residues 257–266 show a composition bias toward basic and acidic residues; sequence EEKHSVKEES. Low complexity predominate over residues 272 to 287; that stretch reads QSSQQSTITSISTTTR. Residues 294–303 are compositionally biased toward basic and acidic residues; sequence REAAAEDKAD. Basic residues predominate over residues 313–324; sequence SKTRKVGGRRGK. The segment covering 392 to 405 has biased composition (basic and acidic residues); the sequence is SSKEGPEEEKETLR.

The protein localises to the cytoplasm. Its subcellular location is the nucleus. In terms of biological role, could be a component of the RPD3C(L) histone deacetylase complex (HDAC). In Schizosaccharomyces pombe (strain 972 / ATCC 24843) (Fission yeast), this protein is Putative histone deacetylase complex subunit cti6 (cti6).